The primary structure comprises 408 residues: S-adenosylmethionine synthase (408 aa).

H15 serves as a coordination point for ATP. D17 serves as a coordination point for Mg(2+). E43 provides a ligand contact to K(+). L-methionine-binding residues include E56 and Q100. The tract at residues 100–110 (QSPDIAQGVNE) is flexible loop. Residues 171-173 (DGK), 248-249 (KF), D257, 263-264 (RK), A280, and K284 contribute to the ATP site. Residue D257 participates in L-methionine binding. K288 is an L-methionine binding site.

This sequence belongs to the AdoMet synthase family. As to quaternary structure, homotetramer; dimer of dimers. Requires Mg(2+) as cofactor. K(+) serves as cofactor.

The protein resides in the cytoplasm. The enzyme catalyses L-methionine + ATP + H2O = S-adenosyl-L-methionine + phosphate + diphosphate. The protein operates within amino-acid biosynthesis; S-adenosyl-L-methionine biosynthesis; S-adenosyl-L-methionine from L-methionine: step 1/1. In terms of biological role, catalyzes the formation of S-adenosylmethionine (AdoMet) from methionine and ATP. The overall synthetic reaction is composed of two sequential steps, AdoMet formation and the subsequent tripolyphosphate hydrolysis which occurs prior to release of AdoMet from the enzyme. This Synechococcus sp. (strain CC9902) protein is S-adenosylmethionine synthase.